The following is a 268-amino-acid chain: Tryptophan synthase alpha chain (268 aa).

Active-site proton acceptor residues include Glu-49 and Asp-60.

It belongs to the TrpA family. As to quaternary structure, tetramer of two alpha and two beta chains.

It catalyses the reaction (1S,2R)-1-C-(indol-3-yl)glycerol 3-phosphate + L-serine = D-glyceraldehyde 3-phosphate + L-tryptophan + H2O. It participates in amino-acid biosynthesis; L-tryptophan biosynthesis; L-tryptophan from chorismate: step 5/5. In terms of biological role, the alpha subunit is responsible for the aldol cleavage of indoleglycerol phosphate to indole and glyceraldehyde 3-phosphate. This is Tryptophan synthase alpha chain from Escherichia coli O7:K1 (strain IAI39 / ExPEC).